A 278-amino-acid polypeptide reads, in one-letter code: MELLEEHLCFEGWQQRWRHDSSTLNCPMTFSIFLPPPRDHTPPPVLYWLSGLTCNDENFTTKAGAQRVAAELGIVLVMPDTSPRGEQVANDDGYDLGQGAGFYLNATQPPWATHYRMYDYLRDELPALVQSQFNVSDRCAISGHSMGGHGALIMALKNPGKYTSVSAFAPIVNPCSIPWGIKAFSRYLGEDKNAWLEWDSCALMYASNAQDAIPTLIDQGDNDQFLADQLQPAVLAEAARQKAWPMTLRIQPGYDHSYYFIASFIEDHLRFHAQYLLK.

Residues Ser-145, Asp-223, and His-256 each act as charge relay system in the active site.

The protein belongs to the esterase D family.

The enzyme catalyses S-formylglutathione + H2O = formate + glutathione + H(+). In terms of biological role, serine hydrolase involved in the detoxification of formaldehyde. Hydrolyzes S-formylglutathione to glutathione and formate. The protein is S-formylglutathione hydrolase YeiG (yeiG) of Escherichia coli (strain SMS-3-5 / SECEC).